The sequence spans 1220 residues: DNA-directed RNA polymerase subunit beta' (1220 aa).

Cys-60, Cys-62, Cys-75, and Cys-78 together coordinate Zn(2+). Asp-449, Asp-451, and Asp-453 together coordinate Mg(2+). Zn(2+) is bound by residues Cys-818, Cys-892, Cys-899, and Cys-902.

This sequence belongs to the RNA polymerase beta' chain family. As to quaternary structure, the RNAP catalytic core consists of 2 alpha, 1 beta, 1 beta' and 1 omega subunit. When a sigma factor is associated with the core the holoenzyme is formed, which can initiate transcription. Mg(2+) serves as cofactor. It depends on Zn(2+) as a cofactor.

The catalysed reaction is RNA(n) + a ribonucleoside 5'-triphosphate = RNA(n+1) + diphosphate. DNA-dependent RNA polymerase catalyzes the transcription of DNA into RNA using the four ribonucleoside triphosphates as substrates. The protein is DNA-directed RNA polymerase subunit beta' of Lacticaseibacillus paracasei (strain ATCC 334 / BCRC 17002 / CCUG 31169 / CIP 107868 / KCTC 3260 / NRRL B-441) (Lactobacillus paracasei).